The following is a 524-amino-acid chain: Cytochrome P450 CYP749A22 (524 aa).

Residues 12-32 (TPILFQFLLSSLCVFLLFVFI) form a helical membrane-spanning segment. Residue Cys472 coordinates heme.

It belongs to the cytochrome P450 family. Requires heme as cofactor.

Its subcellular location is the membrane. Functionally, probable heme-thiolate monooxygenase. The chain is Cytochrome P450 CYP749A22 from Panax ginseng (Korean ginseng).